Consider the following 147-residue polypeptide: Phosphoribosyl-AMP cyclohydrolase (147 aa).

A Mg(2+)-binding site is contributed by Asp-97. Cys-98 contacts Zn(2+). Asp-99 and Asp-101 together coordinate Mg(2+). 2 residues coordinate Zn(2+): Cys-114 and Cys-121.

Belongs to the PRA-CH family. As to quaternary structure, homodimer. Mg(2+) is required as a cofactor. Requires Zn(2+) as cofactor.

The protein localises to the cytoplasm. It catalyses the reaction 1-(5-phospho-beta-D-ribosyl)-5'-AMP + H2O = 1-(5-phospho-beta-D-ribosyl)-5-[(5-phospho-beta-D-ribosylamino)methylideneamino]imidazole-4-carboxamide. It participates in amino-acid biosynthesis; L-histidine biosynthesis; L-histidine from 5-phospho-alpha-D-ribose 1-diphosphate: step 3/9. In terms of biological role, catalyzes the hydrolysis of the adenine ring of phosphoribosyl-AMP. In Hydrogenovibrio crunogenus (strain DSM 25203 / XCL-2) (Thiomicrospira crunogena), this protein is Phosphoribosyl-AMP cyclohydrolase.